We begin with the raw amino-acid sequence, 1493 residues long: MSRAVHLPVPCPVQLGSLRNDSLEAQLHEYVKQGNYVKVKRILKKGIYVDAVNSLGQTALFIAALLGLTKLVDVLVDYGADPNHRCFDGSTPVHAAAFSGNQWILSKLLDAGGDLRLHDEKGRNPQTWALAAGKERSTVMVEFMQRCAAHMQAIIQGFSDLLKKIDSPQRLISGVPRFGGLMQGNPNGSPNRPPKAGVISAQNIYSFGFGKFYLTGGTQLAYLGSLPVIGEKEVIQADDEPTFSFFSGPYMVMTNLVWNGSRVTVKELHLSTHPHCSRLRMADLLIAEQEHSSKLRHPHVLQLMAVCLSPDLEKTRLVYERVTVGTLFSVLHERRAQFPVLHMEVIVHLLLQISDALRYLHSRGFIHRSLSSYAIHIVSTGEARLTNLEYMMESQDGGAHRGLTRVPLPTQLYNWAAPEVIIQKAATVKSDIYSFSVIVQEILTDNIPWDGLDGSVIKETIVLGNYLEADVRLPKPYYDIVKSGLQVKQKDRTMNLQDIRYIMKNDLKDFIGAQRTQPTESPRVQRYEFHPDVNVCLGLTSEHPKETPNLEIKELKETGSQFHSPRGHSSPTGKATPEPPVPDVSPVAQQTHRQDAASPACSVAEEARNPSPDQTSLCSFEINEIYSGCLDTADDPEEECPGTGSSLEGAIPNQTDELKSMEEELEKMEREVCCSCDEDESSSDADTELSCEDWEWQNDALCSPSRPEPARGAKGATNNRSMTEEYISKCVLNLKISQTLIHQNADLLRNVQQKIEKLEMIQKEQAERRSLWASSREFAGIHDSPSALGPPASSYLPPVVQRPGDQQLDPGGSGLTLARSPRTLPTLCGPGKQSRGEQFQPTHGAKASLERDRNQNTSSQGRPRESSPQSKTTQLSSALLTVPSHPQGSPTSSKPGQDSTRISMQSVSSEIYNAKSRNNKDDGEIHLKWKTEVKEMAAKAATGQLTVPPWHPRSGVALDSEAENEPDPLPQLPIRVSEHMDWQQAADYLKKSDEPGGNDKCGQTDSSDQRGRQSGPQRFTSIRHLPPREDEQPEHSEVFQANSDASVAVEKSYSGQSAQSTCSPESSEDTEDMTDEFLTPDHEYFYSSIAQENLALETSSPIDEDFEGIQHACARPQASGEEKFQMRKNLGKNSEILTKSQFQPIRSPEGEQDETLKEPPKEVKEKDISLTDIQDLSSISCEHDGSFKEVSCKTPKINHAPTSVSTPLSPGSLSSVASQYKDCLESIPFQDTKTGSTSCGTSQESTQTLSDKFTSVREKAKSLDSLLTSSEVLPARLTNLKRLPAFTGAGSSSIAKAPDTSRCATQRRSLPKELVEAISQHHIDELPPPSQELLDEIEHLKGQQVSSTALDENTASRPGSTENDQRHLEEQETHSNKEDSSMLWTKETQDLEEDTERAHSTLDEDLERWLQPPEDSTQLPDLPKGPAREASSKDQEVGEKKRKGEESTKPEKRKPESFLGTSEEEELKPCFWKRLGWSEPSRIIVLDQSDLSD.

ANK repeat units lie at residues 27–54 (LHEY…AVNS), 55–84 (LGQT…DPNH), and 88–117 (DGST…DLRL). The region spanning 198-511 (VISAQNIYSF…IMKNDLKDFI (314 aa)) is the Protein kinase domain. ATP is bound by residues 204-212 (IYSFGFGKF) and Lys-266. A Phosphoserine; by PLK1 modification is found at Ser-430. Polar residues predominate over residues 559–573 (GSQFHSPRGHSSPTG). The segment at 559–615 (GSQFHSPRGHSSPTGKATPEPPVPDVSPVAQQTHRQDAASPACSVAEEARNPSPDQT) is disordered. 2 positions are modified to phosphoserine: Ser-560 and Ser-660. Disordered stretches follow at residues 782–904 (HDSP…RISM) and 940–1081 (AATG…LTPD). A GPPX3Y motif is present at residues 789–795 (GPPASSY). Positions 846–854 (KASLERDRN) match the D-box motif. Composition is skewed to polar residues over residues 855–904 (QNTS…RISM) and 1001–1020 (CGQT…QRFT). Basic and acidic residues predominate over residues 1026-1037 (PPREDEQPEHSE). Over residues 1053–1064 (YSGQSAQSTCSP) the composition is skewed to polar residues. The segment covering 1066–1075 (SSEDTEDMTD) has biased composition (acidic residues). Ser-1100 is subject to Phosphoserine. The disordered stretch occupies residues 1115 to 1167 (RPQASGEEKFQMRKNLGKNSEILTKSQFQPIRSPEGEQDETLKEPPKEVKEKD). Positions 1131-1144 (GKNSEILTKSQFQP) are enriched in polar residues. The segment covering 1154-1167 (ETLKEPPKEVKEKD) has biased composition (basic and acidic residues). At Ser-1262 the chain carries Phosphoserine. Disordered regions lie at residues 1288–1307 (GAGS…ATQR) and 1341–1466 (KGQQ…EEEE). The span at 1343–1362 (QQVSSTALDENTASRPGSTE) shows a compositional bias: polar residues. The span at 1363–1380 (NDQRHLEEQETHSNKEDS) shows a compositional bias: basic and acidic residues. Phosphoserine is present on Ser-1400. Over residues 1426 to 1456 (PAREASSKDQEVGEKKRKGEESTKPEKRKPE) the composition is skewed to basic and acidic residues. At Ser-1492 the chain carries Phosphoserine.

The protein belongs to the protein kinase superfamily. In terms of assembly, interacts with KIF23 and RBM44. Interacts with CEP55; inhibiting interaction between CEP55 and PDCD6IP/ALIX and TSG101. In terms of processing, phosphorylated on Thr residues by CDK1 during early phases of mitosis, promoting the interaction with PLK1 and recruitment to kinetochores. Phosphorylated on Ser-430 by PLK1 during late prometaphase promotes the rapid depletion from kinetochores and its subsequent degradation by the APC/C complex.

It is found in the cytoplasm. It localises to the midbody. The protein localises to the chromosome. The protein resides in the centromere. Its subcellular location is the kinetochore. Its function is as follows. Required both for the formation of intercellular bridges during meiosis and for kinetochore-microtubule attachment during mitosis. Intercellular bridges are evolutionarily conserved structures that connect differentiating germ cells and are required for spermatogenesis and male fertility. Acts by promoting the conversion of midbodies into intercellular bridges via its interaction with CEP55: interaction with CEP55 inhibits the interaction between CEP55 and PDCD6IP/ALIX and TSG101, blocking cell abscission and leading to transform midbodies into intercellular bridges. Also plays a role during mitosis: recruited to kinetochores by PLK1 during early mitosis and regulates the maturation of the outer kinetochores and microtubule attachment. Has no protein kinase activity in vitro. The polypeptide is Inactive serine/threonine-protein kinase TEX14 (TEX14) (Bos taurus (Bovine)).